Consider the following 127-residue polypeptide: PanD regulatory factor (127 aa).

An N-acetyltransferase domain is found at 1–127; it reads MKLTILRLEH…TAQHDGWEKR (127 aa). Residues 66-68 and 72-79 contribute to the CoA site; these read LRV and TRRRGVGQ.

Belongs to the PanZ/PanM family. As to quaternary structure, interacts with PanD in the presence of CoA. Monomer.

Controls both the activation and catalytic activity of PanD in a coenzyme A (CoA)-dependent fashion. Binding of CoA or a derivative to PanM leads to interaction with PanD, which promotes the processing and activation of pro-PanD, and subsequent substrate-mediated inhibition of the active form of PanD. Lacks acetyltransferase activity. This Salmonella typhimurium (strain LT2 / SGSC1412 / ATCC 700720) protein is PanD regulatory factor.